A 56-amino-acid chain; its full sequence is Ferredoxin (56 aa).

4Fe-4S ferredoxin-type domains follow at residues 2-28 (AYKI…SQGD) and 29-56 (SIFV…PVQE). [4Fe-4S] cluster contacts are provided by Cys-9, Cys-12, Cys-15, Cys-19, Cys-38, Cys-41, Cys-44, and Cys-48.

It depends on [4Fe-4S] cluster as a cofactor.

In terms of biological role, ferredoxins are iron-sulfur proteins that transfer electrons in a wide variety of metabolic reactions. The protein is Ferredoxin of Clostridium pasteurianum.